The chain runs to 258 residues: Probable dihydroorotate dehydrogenase B (NAD(+)), electron transfer subunit (258 aa).

Residues 1–90 (MRPISATIKE…RGPYGNGWEI (90 aa)) form the FAD-binding FR-type domain. Residues Cys210, Cys215, Cys218, and Cys228 each coordinate [2Fe-2S] cluster.

It belongs to the PyrK family. Heterotetramer of 2 PyrK and 2 PyrD type B subunits. It depends on [2Fe-2S] cluster as a cofactor. The cofactor is FAD.

Its pathway is pyrimidine metabolism; UMP biosynthesis via de novo pathway; orotate from (S)-dihydroorotate (NAD(+) route): step 1/1. Responsible for channeling the electrons from the oxidation of dihydroorotate from the FMN redox center in the PyrD type B subunit to the ultimate electron acceptor NAD(+). This is Probable dihydroorotate dehydrogenase B (NAD(+)), electron transfer subunit from Methanocella arvoryzae (strain DSM 22066 / NBRC 105507 / MRE50).